We begin with the raw amino-acid sequence, 692 residues long: Glycine--tRNA ligase beta subunit (692 aa).

It belongs to the class-II aminoacyl-tRNA synthetase family. As to quaternary structure, tetramer of two alpha and two beta subunits.

The protein resides in the cytoplasm. It carries out the reaction tRNA(Gly) + glycine + ATP = glycyl-tRNA(Gly) + AMP + diphosphate. The protein is Glycine--tRNA ligase beta subunit of Hahella chejuensis (strain KCTC 2396).